The following is an 85-amino-acid chain: Phosphocarrier protein HPr (85 aa).

Residues 1-85 enclose the HPr domain; it reads MFQQEVTITA…HLVKLMAELE (85 aa). His15 acts as the Pros-phosphohistidine intermediate in catalysis.

It belongs to the HPr family.

It localises to the cytoplasm. General (non sugar-specific) component of the phosphoenolpyruvate-dependent sugar phosphotransferase system (sugar PTS). This major carbohydrate active-transport system catalyzes the phosphorylation of incoming sugar substrates concomitantly with their translocation across the cell membrane. The phosphoryl group from phosphoenolpyruvate (PEP) is transferred to the phosphoryl carrier protein HPr by enzyme I. Phospho-HPr then transfers it to the PTS EIIA domain. This Escherichia coli O157:H7 protein is Phosphocarrier protein HPr (ptsH).